The sequence spans 236 residues: Large ribosomal subunit protein eL6 (236 aa).

This sequence belongs to the eukaryotic ribosomal protein eL6 family.

In Dictyostelium discoideum (Social amoeba), this protein is Large ribosomal subunit protein eL6 (rpl6).